A 311-amino-acid chain; its full sequence is Methionyl-tRNA formyltransferase (311 aa).

(6S)-5,6,7,8-tetrahydrofolate is bound at residue serine 110–proline 113.

Belongs to the Fmt family.

The catalysed reaction is L-methionyl-tRNA(fMet) + (6R)-10-formyltetrahydrofolate = N-formyl-L-methionyl-tRNA(fMet) + (6S)-5,6,7,8-tetrahydrofolate + H(+). Attaches a formyl group to the free amino group of methionyl-tRNA(fMet). The formyl group appears to play a dual role in the initiator identity of N-formylmethionyl-tRNA by promoting its recognition by IF2 and preventing the misappropriation of this tRNA by the elongation apparatus. The chain is Methionyl-tRNA formyltransferase from Streptococcus pneumoniae serotype 2 (strain D39 / NCTC 7466).